We begin with the raw amino-acid sequence, 330 residues long: Probable NAD(P)H-dependent D-xylose reductase xyl1 (330 aa).

The active-site Proton donor is Y50. H112 contacts substrate. NAD(+)-binding positions include 166 to 167 (SN), 215 to 224 (SSFGPLSFLE), and 271 to 281 (KSNNPTRLAQN).

This sequence belongs to the aldo/keto reductase family.

It carries out the reaction xylitol + NAD(+) = D-xylose + NADH + H(+). The enzyme catalyses xylitol + NADP(+) = D-xylose + NADPH + H(+). It functions in the pathway carbohydrate metabolism; D-xylose degradation. Its function is as follows. Catalyzes the initial reaction in the xylose utilization pathway by reducing D-xylose into xylitol. Xylose is a major component of hemicelluloses such as xylan. Most fungi utilize D-xylose via three enzymatic reactions, xylose reductase (XR), xylitol dehydrogenase (XDH), and xylulokinase, to form xylulose 5-phosphate, which enters pentose phosphate pathway. In Aspergillus clavatus (strain ATCC 1007 / CBS 513.65 / DSM 816 / NCTC 3887 / NRRL 1 / QM 1276 / 107), this protein is Probable NAD(P)H-dependent D-xylose reductase xyl1 (xyl1).